Here is a 310-residue protein sequence, read N- to C-terminus: Mitochondrial thiamine pyrophosphate carrier 1 (310 aa).

Transmembrane regions (helical) follow at residues 16–32 (VSPY…GGVA), 88–104 (ILYV…YSAL), 117–141 (IVMP…LTTY), 173–197 (GISG…LMFW), 218–234 (ICGF…TFPL), and 274–291 (GYGV…ISLW). 3 Solcar repeats span residues 16 to 107 (VSPY…LSKS), 120 to 205 (PSSV…AREF), and 211 to 299 (HVPF…VISA).

Belongs to the mitochondrial carrier (TC 2.A.29) family.

The protein localises to the mitochondrion inner membrane. Mitochondrial transporter that mediates uptake of thiamine pyrophosphate (ThPP) into mitochondria. This chain is Mitochondrial thiamine pyrophosphate carrier 1 (TPC1), found in Lodderomyces elongisporus (strain ATCC 11503 / CBS 2605 / JCM 1781 / NBRC 1676 / NRRL YB-4239) (Yeast).